We begin with the raw amino-acid sequence, 1163 residues long: Receptor-type guanylate cyclase gcy-21 (1163 aa).

Positions 1–17 (MLSAVLLLLFFIQNVQN) are cleaved as a signal peptide. The Extracellular portion of the chain corresponds to 18–490 (FDKIELEDIT…ENCGPPANNT (473 aa)). N-linked (GlcNAc...) asparagine glycans are attached at residues asparagine 102, asparagine 296, asparagine 322, asparagine 346, asparagine 466, and asparagine 488. Residues 491–511 (FIIVISVGVAVLIGLAIAAAF) traverse the membrane as a helical segment. Residues 512–1163 (LYKRYRYERR…QIQEKTYEFS (652 aa)) are Cytoplasmic-facing. One can recognise a Protein kinase domain in the interval 587–882 (FNTGSTARAG…QIKRKLKPLT (296 aa)). ATP contacts are provided by residues 593-601 (ARAGPFGPI) and lysine 635. The stretch at 901 to 930 (TDKLEKDIAERNEELEGEKAKSEALLKMML) forms a coiled coil. One can recognise a Guanylate cyclase domain in the interval 953–1083 (TVFFSDCPGF…DTVNTASRME (131 aa)).

It belongs to the adenylyl cyclase class-4/guanylyl cyclase family. Expressed in ASG sensory neurons.

Its subcellular location is the cell membrane. The catalysed reaction is GTP = 3',5'-cyclic GMP + diphosphate. In terms of biological role, guanylate cyclase involved in the production of the second messenger cGMP. Plays a role in dauer formation. The polypeptide is Receptor-type guanylate cyclase gcy-21 (Caenorhabditis elegans).